The sequence spans 336 residues: MQPDIAPNPHSTRPGLSRRFSVAPMMDWTDHHCRYFMRLLSSQALLYTEMVTTGALLHGDRERFLRHDETEHPLALQLGGSTAAGLAACARLAEAAGYDEVNLNVGCPSDRVQNNMIGACLMAHPQLVADCVKAMRDAVGIPVTVKHRIGINGRDSYAELCDFVGTVHDAGCQSFTVHARIAILEGLSPKENRDIPPLRYDVVAQLKTDFPELEIVLNGGIKTLEQCSEHLQTFDGVMLGREAYHNPYLLAQVDQQLFGSVAPVISRHAALESMRPYIAAHIASGGNMHHVTRHMLGLGLGFPGARRFRQLLSVDIHKAENPLLLLDQAAKFLEGH.

FMN contacts are provided by residues 24-26 (PMM) and glutamine 77. Cysteine 107 (proton donor) is an active-site residue. Residues lysine 146, histidine 178, 218-220 (NGG), and 240-241 (GR) each bind FMN.

The protein belongs to the Dus family. DusA subfamily. The cofactor is FMN.

It catalyses the reaction 5,6-dihydrouridine(20) in tRNA + NADP(+) = uridine(20) in tRNA + NADPH + H(+). The catalysed reaction is 5,6-dihydrouridine(20) in tRNA + NAD(+) = uridine(20) in tRNA + NADH + H(+). It carries out the reaction 5,6-dihydrouridine(20a) in tRNA + NADP(+) = uridine(20a) in tRNA + NADPH + H(+). The enzyme catalyses 5,6-dihydrouridine(20a) in tRNA + NAD(+) = uridine(20a) in tRNA + NADH + H(+). Catalyzes the synthesis of 5,6-dihydrouridine (D), a modified base found in the D-loop of most tRNAs, via the reduction of the C5-C6 double bond in target uridines. Specifically modifies U20 and U20a in tRNAs. This Pseudomonas syringae pv. tomato (strain ATCC BAA-871 / DC3000) protein is tRNA-dihydrouridine(20/20a) synthase.